Here is a 201-residue protein sequence, read N- to C-terminus: Recombination protein RecR (201 aa).

A C4-type zinc finger spans residues 60 to 75 (CRSCGNVDTSDPCTIC). One can recognise a Toprim domain in the interval 83-178 (TTLVVVEDVS…TVTRLAHGVP (96 aa)).

The protein belongs to the RecR family.

May play a role in DNA repair. It seems to be involved in an RecBC-independent recombinational process of DNA repair. It may act with RecF and RecO. This Methylorubrum extorquens (strain CM4 / NCIMB 13688) (Methylobacterium extorquens) protein is Recombination protein RecR.